Reading from the N-terminus, the 394-residue chain is 2-oxoglutarate and iron-dependent oxygenase domain-containing protein CP2 (394 aa).

The tract at residues 1-35 (MSSEQREGSQETTTTTVEGNGTIAGQNSHSAAPTT) is disordered. Residues 17-35 (VEGNGTIAGQNSHSAAPTT) are compositionally biased toward polar residues. Residues 248-347 (DSHHGFVVEY…RVNMLLWCRS (100 aa)) enclose the Fe2OG dioxygenase domain. 3 residues coordinate Fe cation: H268, D270, and H328. 2-oxoglutarate is bound at residue R338.

Fe(2+) is required as a cofactor. L-ascorbate serves as cofactor. Expressed in roots, cotyledons, rosette leaves, cauline leaves, inflorescences and siliques.

The protein localises to the nucleus. Its subcellular location is the nucleoplasm. Its function is as follows. Participates in the epigenetic repression of flowering genes in association with ICU11. Functions in the repression of several members of the MADS-box transcription factors family, including SEP3, during vegetative development via histone modification. This Arabidopsis thaliana (Mouse-ear cress) protein is 2-oxoglutarate and iron-dependent oxygenase domain-containing protein CP2.